The chain runs to 424 residues: Ribulose bisphosphate carboxylase (424 aa).

K159 serves as the catalytic Proton acceptor. K161 provides a ligand contact to substrate. The Mg(2+) site is built by K185, D187, and E188. K185 bears the N6-carboxylysine mark. The active-site Proton acceptor is the H277. Substrate contacts are provided by residues R278, H310, 347 to 349 (SGG), and 369 to 372 (QAGG).

The protein belongs to the RuBisCO large chain family. Type III subfamily. In terms of assembly, homodimer or homodecamer. In contrast to form I RuBisCO, the form III RuBisCO is composed solely of large subunits. Requires Mg(2+) as cofactor.

It catalyses the reaction 2 (2R)-3-phosphoglycerate + 2 H(+) = D-ribulose 1,5-bisphosphate + CO2 + H2O. The enzyme catalyses D-ribulose 1,5-bisphosphate + O2 = 2-phosphoglycolate + (2R)-3-phosphoglycerate + 2 H(+). Functionally, catalyzes the addition of molecular CO(2) and H(2)O to ribulose 1,5-bisphosphate (RuBP), generating two molecules of 3-phosphoglycerate (3-PGA). Functions in an archaeal AMP degradation pathway, together with AMP phosphorylase and R15P isomerase. The polypeptide is Ribulose bisphosphate carboxylase (Pyrococcus abyssi (strain GE5 / Orsay)).